The following is a 364-amino-acid chain: Putative agmatine deiminase (364 aa).

Catalysis depends on Cys-355, which acts as the Amidino-cysteine intermediate.

The protein belongs to the agmatine deiminase family.

The catalysed reaction is agmatine + H2O = N-carbamoylputrescine + NH4(+). The protein is Putative agmatine deiminase of Mycoplasma mycoides subsp. mycoides SC (strain CCUG 32753 / NCTC 10114 / PG1).